The sequence spans 771 residues: Endoplasmin homolog (771 aa).

The signal sequence occupies residues 1 to 24 (MANSSLLRVVLVALLLLGSVTVSA). Positions 63, 109, and 160 each coordinate ATP. Asparagine 63 is a glycosylation site (N-linked (GlcNAc...) asparagine). The tract at residues 254-282 (AATPESAAEERSLDEGAVEEDPDKEGDTQ) is disordered. N-linked (GlcNAc...) asparagine glycosylation is found at asparagine 306 and asparagine 402. The disordered stretch occupies residues 727-771 (ADDSLLPPDDAEYTVSDTETEEEEEQPKVDTNAHEEAETDGEGDL). Basic and acidic residues predominate over residues 752–762 (QPKVDTNAHEE). The Prevents secretion from ER motif lies at 768–771 (EGDL).

It belongs to the heat shock protein 90 family. In terms of assembly, homotetramer.

Its subcellular location is the endoplasmic reticulum. Functionally, molecular chaperone that functions in the processing and transport of secreted proteins. Required for the synthesis of lipophosphoglycan (LPG), a cell surface glycoconjugate. Necessary for the attachment of the galactosyl residue to the mannose within the phosphoglycan repeats of the nascent LPG chain. Also required for addition of phosphoglycan to acid phosphatase. Not required for normal growth. Has ATPase activity. Binds heparin with micromolar affinity which may facilitate infection of host cells. The sequence is that of Endoplasmin homolog from Leishmania donovani.